Consider the following 383-residue polypeptide: Prokineticin receptor 2 (383 aa).

Over Met-1 to Ile-54 the chain is Extracellular. N-linked (GlcNAc...) asparagine glycans are attached at residues Asn-7 and Asn-27. A helical transmembrane segment spans residues Val-55–Ile-75. Residues Ala-76–Asn-89 are Cytoplasmic-facing. A helical membrane pass occupies residues Leu-90–Glu-110. Over Met-111 to Thr-136 the chain is Extracellular. Residues Cys-128 and Cys-207 are joined by a disulfide bond. Residues Val-137 to Ile-157 traverse the membrane as a helical segment. The Cytoplasmic portion of the chain corresponds to Val-158–Ser-170. Residues Phe-171 to Thr-191 form a helical membrane-spanning segment. Topologically, residues Thr-192–Tyr-222 are extracellular. The chain crosses the membrane as a helical span at residues Phe-223–Ala-243. Over Arg-244–Thr-272 the chain is Cytoplasmic. Residues Val-273–Phe-293 traverse the membrane as a helical segment. At Thr-294 to Thr-312 the chain is on the extracellular side. The chain crosses the membrane as a helical span at residues Ala-313–Val-333. Topologically, residues Thr-334 to Lys-383 are cytoplasmic.

It belongs to the G-protein coupled receptor 1 family. In terms of assembly, homodimer. As to expression, abundantly expressed in the CNS and reproductive organs with the highest levels in the cerebrum, cerebellum, testis and ovary.

The protein localises to the cell membrane. Receptor for prokineticin 2. Exclusively coupled to the G(q) subclass of heteromeric G proteins. Activation leads to mobilization of calcium, stimulation of phosphoinositide turnover and activation of p44/p42 mitogen-activated protein kinase. In Rattus norvegicus (Rat), this protein is Prokineticin receptor 2 (Prokr2).